The primary structure comprises 697 residues: CENP-A multicopy suppressor protein 2 (697 aa).

A GATA-type; atypical zinc finger spans residues 351 to 378; it reads CQNCGTIKTANWRNATYMNITLMLCNAC. Residues 443-484 are disordered; that stretch reads PLNRLTSLDSTHSAPDPNHISKPSVVNQQKSRGGPRTAKLKN. Residues 445-455 are compositionally biased toward polar residues; sequence NRLTSLDSTHS.

In terms of assembly, interacts with CENP-A.

It is found in the nucleus. It localises to the chromosome. The protein resides in the centromere. Functionally, required for proper chromosome segregation via regulation of CENP-A localization to the centromere. The chain is CENP-A multicopy suppressor protein 2 (ams2) from Schizosaccharomyces pombe (strain 972 / ATCC 24843) (Fission yeast).